The primary structure comprises 267 residues: Ribosomal RNA small subunit methyltransferase A (267 aa).

Residues leucine 20, glycine 45, glutamate 68, aspartate 91, and asparagine 113 each coordinate S-adenosyl-L-methionine.

The protein belongs to the class I-like SAM-binding methyltransferase superfamily. rRNA adenine N(6)-methyltransferase family. RsmA subfamily.

The protein localises to the cytoplasm. The enzyme catalyses adenosine(1518)/adenosine(1519) in 16S rRNA + 4 S-adenosyl-L-methionine = N(6)-dimethyladenosine(1518)/N(6)-dimethyladenosine(1519) in 16S rRNA + 4 S-adenosyl-L-homocysteine + 4 H(+). Specifically dimethylates two adjacent adenosines (A1518 and A1519) in the loop of a conserved hairpin near the 3'-end of 16S rRNA in the 30S particle. May play a critical role in biogenesis of 30S subunits. The polypeptide is Ribosomal RNA small subunit methyltransferase A (Blochmanniella pennsylvanica (strain BPEN)).